The chain runs to 575 residues: MKLIEHYVALVKTGCAEYGQMNEMTLTEIADCLFCTERNAKLILHKLENSNWIIRESGAGRGRKSKIAFLRRPEELLLQTAKEYTMSGKLKKAKELLQQYQSAFPGLQNEYNMWLSEVFGFVTETGENGAKDVLRLFITPESVSSLDPCQIFLRSEGHFVKQIFDTLFTFDSDMQEPKPHLVHGWEEVGKKQWRFFLRKGVLFHNGQPLTSRDVAFTFQRFLELADNPYKWLLHGVKQVLEKGPYCVELILDKPNALLPYALCDERLSILPAEQGGGKNGTGPFQMNQQHSGMLVLEANERYFKGRPYLDRVEFVFSEQAGEMNGFTIQEKQTCPEQQTVFDERHVQYLSLNLKKKGPLQHRSFRKALRLLISSERLVREAGGHRRIPVTSFLHPSPFEWEGVSPSELLKKSGYEGETIVLYTFSETDHREDAEWIQNICAQHGIRLTLQFCDAADLRRPEIVQMADIIHDSATFYQDSEFGFLHLLLSENSFLYQHLSEKLTQICSGMTERMFSMPDRCSRINILRDIDRQMIQELNAIPLYQNVLQVTSSKNVKGLVLDEEGWIDLYSVWLSK.

One can recognise an HTH marR-type domain in the interval 1–120; it reads MKLIEHYVAL…YNMWLSEVFG (120 aa). Residues 26–49 constitute a DNA-binding region (H-T-H motif); the sequence is LTEIADCLFCTERNAKLILHKLEN. Positions 176–490 are solute-binding region; that stretch reads EPKPHLVHGW…FGFLHLLLSE (315 aa).

It in the C-terminal section; belongs to the bacterial solute-binding protein 5 family.

This is an uncharacterized protein from Bacillus subtilis (strain 168).